Here is a 176-residue protein sequence, read N- to C-terminus: Nucleoside triphosphate/diphosphate phosphatase (176 aa).

Arginine 23 (proton donor) is an active-site residue. Asparagine 87, aspartate 103, aspartate 105, aspartate 107, aspartate 120, and glutamate 123 together coordinate Mg(2+).

This sequence belongs to the Ntdp family. Mg(2+) is required as a cofactor.

It carries out the reaction a ribonucleoside 5'-triphosphate + H2O = a ribonucleoside 5'-diphosphate + phosphate + H(+). The enzyme catalyses a ribonucleoside 5'-diphosphate + H2O = a ribonucleoside 5'-phosphate + phosphate + H(+). Functionally, has nucleoside phosphatase activity towards nucleoside triphosphates and nucleoside diphosphates. The protein is Nucleoside triphosphate/diphosphate phosphatase of Bacillus anthracis (strain A0248).